A 202-amino-acid chain; its full sequence is Coiled-coil domain-containing protein 85B (202 aa).

Residue M1 is modified to N-acetylmethionine. 2 coiled-coil regions span residues 44 to 82 (RLMQ…DLCC) and 118 to 141 (QKLA…KELC). Positions 152-162 (GGPGGAVGSGA) are enriched in gly residues. Residues 152–202 (GGPGGAVGSGAGPTPELALPPCGPRDLGDGSSSTGSVGSPDQLPLACSPDD) are disordered. The span at 180–190 (DGSSSTGSVGS) shows a compositional bias: low complexity.

This sequence belongs to the CCDC85 family. In terms of assembly, interacts with CEBPB. May interact with CEBPD. Interacts with EURL. Interacts with MCRS1. Interacts with TCF7L2; competes with CTNNB1. Interacts with ANKRD26. Interacts with the beta-catenin family proteins ARVCF, CTNND1, CTNND2 and PKP4. As to expression, expressed in white and brown adipose tissue.

The protein localises to the nucleus. The protein resides in the cytoplasm. It is found in the cytoskeleton. Its subcellular location is the microtubule organizing center. It localises to the centrosome. The protein localises to the cell junction. The protein resides in the adherens junction. Its function is as follows. Functions as a transcriptional repressor. May inhibit the activity of CTNNB1 in a TP53-dependent manner and thus regulate cell growth. May function in adipocyte differentiation, negatively regulating mitotic clonal expansion. Plays a role in cell-cell adhesion and epithelium development through its interaction with proteins of the beta-catenin family. The polypeptide is Coiled-coil domain-containing protein 85B (Ccdc85b) (Mus musculus (Mouse)).